The chain runs to 274 residues: Phosphatidylglycerol--prolipoprotein diacylglyceryl transferase (274 aa).

4 helical membrane-spanning segments follow: residues 19 to 39 (VGSV…VLGL), 59 to 79 (LAIW…VLFQ), 93 to 113 (IWRG…AALI), and 120 to 140 (VSFW…QAIG). Arginine 141 contacts a 1,2-diacyl-sn-glycero-3-phospho-(1'-sn-glycerol). Helical transmembrane passes span 181 to 201 (TFLY…ALFF), 209 to 229 (GTIF…IEGL), and 243 to 263 (QVVS…LYLL).

This sequence belongs to the Lgt family.

It localises to the cell inner membrane. The enzyme catalyses L-cysteinyl-[prolipoprotein] + a 1,2-diacyl-sn-glycero-3-phospho-(1'-sn-glycerol) = an S-1,2-diacyl-sn-glyceryl-L-cysteinyl-[prolipoprotein] + sn-glycerol 1-phosphate + H(+). Its pathway is protein modification; lipoprotein biosynthesis (diacylglyceryl transfer). Catalyzes the transfer of the diacylglyceryl group from phosphatidylglycerol to the sulfhydryl group of the N-terminal cysteine of a prolipoprotein, the first step in the formation of mature lipoproteins. This is Phosphatidylglycerol--prolipoprotein diacylglyceryl transferase from Acaryochloris marina (strain MBIC 11017).